The following is a 59-amino-acid chain: Putative conotoxin (59 aa).

Positions 1–25 (MGMRMMFTVFLLVVLATTVVPITLA) are cleaved as a signal peptide. A propeptide spanning residues 26–47 (SATDGRNAAANARVSPVISKSS) is cleaved from the precursor.

The protein belongs to the conotoxin A superfamily. Expressed by the venom duct.

It is found in the secreted. Functionally, acts as a neurotoxin. The sequence is that of Putative conotoxin from Conus imperialis (Imperial cone).